Consider the following 232-residue polypeptide: 6-phosphogluconolactonase (232 aa).

This sequence belongs to the glucosamine/galactosamine-6-phosphate isomerase family. 6-phosphogluconolactonase subfamily.

It carries out the reaction 6-phospho-D-glucono-1,5-lactone + H2O = 6-phospho-D-gluconate + H(+). Its pathway is carbohydrate degradation; pentose phosphate pathway; D-ribulose 5-phosphate from D-glucose 6-phosphate (oxidative stage): step 2/3. Functionally, hydrolysis of 6-phosphogluconolactone to 6-phosphogluconate. This is 6-phosphogluconolactonase (pgl) from Aggregatibacter actinomycetemcomitans (Actinobacillus actinomycetemcomitans).